The following is a 93-amino-acid chain: Small ribosomal subunit protein uS15 (93 aa).

Belongs to the universal ribosomal protein uS15 family. As to quaternary structure, part of the 30S ribosomal subunit. Forms a bridge to the 50S subunit in the 70S ribosome, contacting the 23S rRNA.

Functionally, one of the primary rRNA binding proteins, it binds directly to 16S rRNA where it helps nucleate assembly of the platform of the 30S subunit by binding and bridging several RNA helices of the 16S rRNA. Its function is as follows. Forms an intersubunit bridge (bridge B4) with the 23S rRNA of the 50S subunit in the ribosome. This Ehrlichia chaffeensis (strain ATCC CRL-10679 / Arkansas) protein is Small ribosomal subunit protein uS15.